A 512-amino-acid chain; its full sequence is NAD(P) transhydrogenase subunit alpha (512 aa).

At 1–400 (MLIGVPRELL…KESKPTDPRV (400 aa)) the chain is on the cytoplasmic side. Residues 125-128 (QALD), valine 175, 195-197 (DSR), and glycine 225 each bind NAD(+). Residues 375–394 (SAQPKQETKAAPVAEKKESK) are disordered. 2 helical membrane passes run 401-421 (KYGV…VAPA) and 422-442 (AFLS…YVVW). Residues 443 to 451 (NVSHALHTP) lie on the Cytoplasmic side of the membrane. The helical transmembrane segment at 452 to 472 (LMAVTNAISGIIIVGALLQIR) threads the bilayer. The Periplasmic portion of the chain corresponds to 473 to 478 (QPTGNL). Residues 479–499 (FIDALAFVAILVASINIFGGF) traverse the membrane as a helical segment. The Cytoplasmic portion of the chain corresponds to 500–512 (RVTQRMLAMFRKG).

This sequence belongs to the AlaDH/PNT family. Heterodimer of an alpha (PntA) and a beta (PntB) chain.

The protein localises to the cell inner membrane. It carries out the reaction NAD(+) + NADPH + H(+)(in) = NADH + NADP(+) + H(+)(out). Functionally, the transhydrogenation between NADH and NADP is coupled to respiration and ATP hydrolysis and functions as a proton pump across the membrane. The polypeptide is NAD(P) transhydrogenase subunit alpha (pntA) (Haemophilus influenzae (strain ATCC 51907 / DSM 11121 / KW20 / Rd)).